Here is a 637-residue protein sequence, read N- to C-terminus: 1-deoxy-D-xylulose-5-phosphate synthase (637 aa).

Thiamine diphosphate-binding positions include His74 and 115-117 (GHS). Position 146 (Asp146) interacts with Mg(2+). Thiamine diphosphate is bound by residues 147-148 (GA), Asn175, Tyr285, and Glu366. Asn175 serves as a coordination point for Mg(2+).

Belongs to the transketolase family. DXPS subfamily. In terms of assembly, homodimer. Mg(2+) serves as cofactor. Requires thiamine diphosphate as cofactor.

The catalysed reaction is D-glyceraldehyde 3-phosphate + pyruvate + H(+) = 1-deoxy-D-xylulose 5-phosphate + CO2. Its pathway is metabolic intermediate biosynthesis; 1-deoxy-D-xylulose 5-phosphate biosynthesis; 1-deoxy-D-xylulose 5-phosphate from D-glyceraldehyde 3-phosphate and pyruvate: step 1/1. Functionally, catalyzes the acyloin condensation reaction between C atoms 2 and 3 of pyruvate and glyceraldehyde 3-phosphate to yield 1-deoxy-D-xylulose-5-phosphate (DXP). The protein is 1-deoxy-D-xylulose-5-phosphate synthase of Pelotomaculum thermopropionicum (strain DSM 13744 / JCM 10971 / SI).